The following is a 177-amino-acid chain: CASP-like protein 5A2 (177 aa).

Residues 1–36 (MNASHPAVHPVGVPPAVAGQLPPRMRMKEIQGMPGT) are Cytoplasmic-facing. The chain crosses the membrane as a helical span at residues 37–57 (IGGLLLRLGQFCFALVAFSIM). The Extracellular segment spans residues 58-68 (VSIENFSTVTA). N62 carries an N-linked (GlcNAc...) asparagine glycan. A helical transmembrane segment spans residues 69–89 (FCYLVAATVLQCLWSLALAII). Over 90 to 103 (DGYALLVKRSLRNS) the chain is Cytoplasmic. A helical membrane pass occupies residues 104-124 (LLVSLLVVGDGVTATLTFAAA). The Extracellular portion of the chain corresponds to 125–153 (CASAGITVLIGNDLRQCKENHCARYETAT). Residues 154–174 (ALAFLSWFMVSLSFILTFWLL) form a helical membrane-spanning segment. Topologically, residues 175–177 (ATR) are cytoplasmic.

The protein belongs to the Casparian strip membrane proteins (CASP) family. As to quaternary structure, homodimer and heterodimers.

The protein resides in the cell membrane. The chain is CASP-like protein 5A2 from Ginkgo biloba (Ginkgo).